A 295-amino-acid polypeptide reads, in one-letter code: 3-methyl-2-oxobutanoate hydroxymethyltransferase (295 aa).

Mg(2+) contacts are provided by aspartate 53 and aspartate 92. 3-methyl-2-oxobutanoate-binding positions include 53–54 (DS), aspartate 92, and lysine 122. Glutamate 124 is a Mg(2+) binding site. Residue glutamate 191 is the Proton acceptor of the active site.

This sequence belongs to the PanB family. As to quaternary structure, homodecamer; pentamer of dimers. The cofactor is Mg(2+).

It localises to the cytoplasm. The catalysed reaction is 3-methyl-2-oxobutanoate + (6R)-5,10-methylene-5,6,7,8-tetrahydrofolate + H2O = 2-dehydropantoate + (6S)-5,6,7,8-tetrahydrofolate. It functions in the pathway cofactor biosynthesis; (R)-pantothenate biosynthesis; (R)-pantoate from 3-methyl-2-oxobutanoate: step 1/2. Functionally, catalyzes the reversible reaction in which hydroxymethyl group from 5,10-methylenetetrahydrofolate is transferred onto alpha-ketoisovalerate to form ketopantoate. The chain is 3-methyl-2-oxobutanoate hydroxymethyltransferase from Koribacter versatilis (strain Ellin345).